The following is a 585-amino-acid chain: Switch-associated protein 70 (585 aa).

Positions 210–306 constitute a PH domain; sequence DVLKQGYMMK…WIQAIYSTIH (97 aa). The stretch at 316–529 forms a coiled coil; sequence HKEARQRRKE…VKKKLEMATH (214 aa). The interval 347–373 is disordered; that stretch reads ANENKQQELESVRKKLEEAASRAADEE. Residues 351-373 show a composition bias toward basic and acidic residues; that stretch reads KQQELESVRKKLEEAASRAADEE.

The SWAP complex consists of NPM1, NCL, PARP1 and SWAP70. Post-translationally, tyrosine-phosphorylated. Spleen. Expressed only in B-cells that have been induced to switch to various Ig isotypes.

It localises to the cytoplasm. The protein localises to the cell membrane. The protein resides in the nucleus. Its subcellular location is the cell projection. It is found in the lamellipodium. It localises to the cytoskeleton. Functionally, phosphatidylinositol 3,4,5-trisphosphate-dependent guanine nucleotide exchange factor (GEF) which, independently of RAS, transduces signals from tyrosine kinase receptors to RAC. It also mediates signaling of membrane ruffling. Regulates the actin cytoskeleton as an effector or adapter protein in response to agonist stimulated phosphatidylinositol (3,4)-bisphosphate production and cell protrusion. The protein is Switch-associated protein 70 (Swap70) of Mus musculus (Mouse).